The chain runs to 135 residues: uncharacterized protein (135 aa).

The protein belongs to the transcriptional regulatory CopG/NikR family.

This is an uncharacterized protein from Methanocaldococcus jannaschii (strain ATCC 43067 / DSM 2661 / JAL-1 / JCM 10045 / NBRC 100440) (Methanococcus jannaschii).